A 420-amino-acid polypeptide reads, in one-letter code: Putative movement protein (420 aa).

Low complexity-rich tracts occupy residues 1-18 (MPLT…TSFS) and 30-59 (TSCS…GSCP). 6 disordered regions span residues 1 to 77 (MPLT…TARP), 137 to 181 (SMSR…SARS), 195 to 219 (RPKT…STRT), 235 to 281 (IMSE…RPPP), 327 to 370 (PSAG…RPIQ), and 396 to 420 (LPPP…QPWP). Pro residues predominate over residues 60-69 (KTPPGTPPLP). Over residues 137 to 157 (SMSRRATQPPTTRSRVRPSTG) the composition is skewed to polar residues. Residues 158–181 (SRPPVSPLVTSSSPSPFSTLSARS) show a composition bias toward low complexity. The span at 253–263 (GLRSASLSTAG) shows a compositional bias: polar residues. Low complexity predominate over residues 327–348 (PSAGSSPFTPTVSGCSASTSSA).

In terms of biological role, cell-to-cell movement. The polypeptide is Putative movement protein (Maize rayado fino virus (isolate Costa Rica/Guapiles) (MRFV)).